Reading from the N-terminus, the 107-residue chain is NADH dehydrogenase [ubiquinone] 1 beta subcomplex subunit 10-A (107 aa).

The tract at residues Met-1–Pro-23 is disordered.

The protein belongs to the complex I NDUFB10 subunit family. In terms of assembly, complex I is composed of at least 49 different subunits.

It localises to the mitochondrion inner membrane. Functionally, accessory subunit of the mitochondrial membrane respiratory chain NADH dehydrogenase (Complex I), that is believed not to be involved in catalysis. Complex I functions in the transfer of electrons from NADH to the respiratory chain. The immediate electron acceptor for the enzyme is believed to be ubiquinone. This is NADH dehydrogenase [ubiquinone] 1 beta subcomplex subunit 10-A from Arabidopsis thaliana (Mouse-ear cress).